The sequence spans 235 residues: Large ribosomal subunit protein uL1 (235 aa).

It belongs to the universal ribosomal protein uL1 family. As to quaternary structure, part of the 50S ribosomal subunit.

Binds directly to 23S rRNA. The L1 stalk is quite mobile in the ribosome, and is involved in E site tRNA release. Its function is as follows. Protein L1 is also a translational repressor protein, it controls the translation of the L11 operon by binding to its mRNA. This Mycobacteroides abscessus (strain ATCC 19977 / DSM 44196 / CCUG 20993 / CIP 104536 / JCM 13569 / NCTC 13031 / TMC 1543 / L948) (Mycobacterium abscessus) protein is Large ribosomal subunit protein uL1.